The sequence spans 354 residues: Glycerol-1-phosphate dehydrogenase [NAD(P)+] (354 aa).

Residues 103–107 (GRAVD) and 125–128 (TAAS) contribute to the NAD(+) site. D130 provides a ligand contact to substrate. S134 provides a ligand contact to NAD(+). D176 serves as a coordination point for substrate. Zn(2+) contacts are provided by D176 and H255. H259 lines the substrate pocket. Position 271 (H271) interacts with Zn(2+).

This sequence belongs to the glycerol-1-phosphate dehydrogenase family. Homodimer. Zn(2+) serves as cofactor.

The protein resides in the cytoplasm. It catalyses the reaction sn-glycerol 1-phosphate + NAD(+) = dihydroxyacetone phosphate + NADH + H(+). The catalysed reaction is sn-glycerol 1-phosphate + NADP(+) = dihydroxyacetone phosphate + NADPH + H(+). It functions in the pathway membrane lipid metabolism; glycerophospholipid metabolism. Catalyzes the NAD(P)H-dependent reduction of dihydroxyacetonephosphate (DHAP or glycerone phosphate) to glycerol 1-phosphate (G1P). The G1P thus generated is used as the glycerophosphate backbone of phospholipids in the cellular membranes of Archaea. The sequence is that of Glycerol-1-phosphate dehydrogenase [NAD(P)+] from Cenarchaeum symbiosum (strain A).